A 99-amino-acid chain; its full sequence is MPNSNGPLSNSGGKLQNDPRDRGTSPPQRAIADYDDGESVHLTLDPSVQDGRFHPRFSGLTGTVVGTQGDAFKVEVNDGGMDKTLIVGAAHLRTQRQEE.

Positions 1-14 (MPNSNGPLSNSGGK) are enriched in polar residues. The segment at 1–38 (MPNSNGPLSNSGGKLQNDPRDRGTSPPQRAIADYDDGE) is disordered.

The protein belongs to the eukaryotic ribosomal protein eL21 family.

The protein is Large ribosomal subunit protein eL21 of Halobacterium salinarum (strain ATCC 29341 / DSM 671 / R1).